Reading from the N-terminus, the 173-residue chain is Crossover junction endodeoxyribonuclease RuvC (173 aa).

Residues Asp8, Glu67, and Asp139 contribute to the active site. Asp8, Glu67, and Asp139 together coordinate Mg(2+).

This sequence belongs to the RuvC family. Homodimer which binds Holliday junction (HJ) DNA. The HJ becomes 2-fold symmetrical on binding to RuvC with unstacked arms; it has a different conformation from HJ DNA in complex with RuvA. In the full resolvosome a probable DNA-RuvA(4)-RuvB(12)-RuvC(2) complex forms which resolves the HJ. The cofactor is Mg(2+).

It is found in the cytoplasm. The enzyme catalyses Endonucleolytic cleavage at a junction such as a reciprocal single-stranded crossover between two homologous DNA duplexes (Holliday junction).. Functionally, the RuvA-RuvB-RuvC complex processes Holliday junction (HJ) DNA during genetic recombination and DNA repair. Endonuclease that resolves HJ intermediates. Cleaves cruciform DNA by making single-stranded nicks across the HJ at symmetrical positions within the homologous arms, yielding a 5'-phosphate and a 3'-hydroxyl group; requires a central core of homology in the junction. The consensus cleavage sequence is 5'-(A/T)TT(C/G)-3'. Cleavage occurs on the 3'-side of the TT dinucleotide at the point of strand exchange. HJ branch migration catalyzed by RuvA-RuvB allows RuvC to scan DNA until it finds its consensus sequence, where it cleaves and resolves the cruciform DNA. This Shewanella oneidensis (strain ATCC 700550 / JCM 31522 / CIP 106686 / LMG 19005 / NCIMB 14063 / MR-1) protein is Crossover junction endodeoxyribonuclease RuvC.